The following is a 576-amino-acid chain: MAGUK p55 subfamily member 7 (576 aa).

2 consecutive L27 domains span residues 10 to 64 (SEMG…EDCA) and 65 to 122 (PTPV…YDPE). The region spanning 139–220 (IIRLVKNKEP…AITFKVVPGI (82 aa)) is the PDZ domain. The 71-residue stretch at 228–298 (EPKMFIKALF…PSKHFQERRL (71 aa)) folds into the SH3 domain. Residues 368-560 (HRLVVLVGPT…AFSELKQALK (193 aa)) enclose the Guanylate kinase-like domain.

The protein belongs to the MAGUK family.

Its subcellular location is the membrane. It is found in the cell junction. It localises to the tight junction. The protein localises to the adherens junction. In terms of biological role, acts as an important adapter that promotes epithelial cell polarity and tight junction formation. Involved in the assembly of protein complexes at sites of cell-cell contact. In Danio rerio (Zebrafish), this protein is MAGUK p55 subfamily member 7 (mpp7).